Reading from the N-terminus, the 247-residue chain is GTP cyclohydrolase 1 type 2 homolog (247 aa).

A divalent metal cation is bound by residues His63, His64, Asp101, His215, and Glu219.

Belongs to the GTP cyclohydrolase I type 2/NIF3 family. As to quaternary structure, homohexamer.

The sequence is that of GTP cyclohydrolase 1 type 2 homolog from Buchnera aphidicola subsp. Schizaphis graminum (strain Sg).